The primary structure comprises 393 residues: MLVSLANWLQGHYPDSFGFLRVVQYLTFRAVMSAMTALLLGLVFGPWVIRRLTELKIGQPVREYGVQSHLVKTGTPTMGGVLILLSIAVSTLLWFDWSNRFVWVVMLVTFGFGAIGWVDDWRKVVQKNPEGMASGEKYLWQSLIGLVAAIYLAFSVSETSNLRVLELFLRWVGSGFSNDLPPKADLIVPFFKSVSYPLGVFGFIFLTYFVIVGASNAVNLTDGLDGLAIMPVVLVGSALGLFAYVTGNSVFSKYLLLPHIPGAGELLIFCAAMAGAGLAFLWFNAYPAQVFMGDVGALALGGALGTIAVIVRQEIVLGIMGGIFVVEALSVMAQVAYFKYTKKRYGQGRRILLMAPLHHHYEKKGWEETQVVVRFWIITMLLCLVGLSTLKLR.

10 helical membrane-spanning segments follow: residues 29–49 (RAVM…PWVI), 75–95 (TPTM…LLWF), 101–121 (FVWV…VDDW), 138–158 (YLWQ…SVSE), 194–214 (VSYP…IVGA), 226–246 (GLAI…AYVT), 263–283 (AGEL…FLWF), 290–310 (VFMG…IAVI), 315–335 (IVLG…MAQV), and 370–390 (QVVV…LSTL).

Belongs to the glycosyltransferase 4 family. MraY subfamily. Mg(2+) is required as a cofactor.

The protein resides in the cell inner membrane. It carries out the reaction UDP-N-acetyl-alpha-D-muramoyl-L-alanyl-gamma-D-glutamyl-meso-2,6-diaminopimeloyl-D-alanyl-D-alanine + di-trans,octa-cis-undecaprenyl phosphate = di-trans,octa-cis-undecaprenyl diphospho-N-acetyl-alpha-D-muramoyl-L-alanyl-D-glutamyl-meso-2,6-diaminopimeloyl-D-alanyl-D-alanine + UMP. Its pathway is cell wall biogenesis; peptidoglycan biosynthesis. Catalyzes the initial step of the lipid cycle reactions in the biosynthesis of the cell wall peptidoglycan: transfers peptidoglycan precursor phospho-MurNAc-pentapeptide from UDP-MurNAc-pentapeptide onto the lipid carrier undecaprenyl phosphate, yielding undecaprenyl-pyrophosphoryl-MurNAc-pentapeptide, known as lipid I. The sequence is that of Phospho-N-acetylmuramoyl-pentapeptide-transferase from Leptothrix cholodnii (strain ATCC 51168 / LMG 8142 / SP-6) (Leptothrix discophora (strain SP-6)).